A 388-amino-acid chain; its full sequence is Peptide chain release factor subunit 1 (388 aa).

The protein belongs to the eukaryotic release factor 1 family. In terms of assembly, heterodimer of two subunits, one of which binds GTP.

Its subcellular location is the cytoplasm. In terms of biological role, directs the termination of nascent peptide synthesis (translation) in response to the termination codons UAA, UAG and UGA. The polypeptide is Peptide chain release factor subunit 1 (prf1) (Pyrobaculum aerophilum (strain ATCC 51768 / DSM 7523 / JCM 9630 / CIP 104966 / NBRC 100827 / IM2)).